A 245-amino-acid chain; its full sequence is DNA repair protein RecO (245 aa).

It belongs to the RecO family.

Involved in DNA repair and RecF pathway recombination. The chain is DNA repair protein RecO from Porphyromonas gingivalis (strain ATCC 33277 / DSM 20709 / CIP 103683 / JCM 12257 / NCTC 11834 / 2561).